Here is a 577-residue protein sequence, read N- to C-terminus: 2-succinyl-5-enolpyruvyl-6-hydroxy-3-cyclohexene-1-carboxylate synthase (577 aa).

Belongs to the TPP enzyme family. MenD subfamily. As to quaternary structure, homodimer. Requires Mg(2+) as cofactor. Mn(2+) serves as cofactor. It depends on thiamine diphosphate as a cofactor.

It catalyses the reaction isochorismate + 2-oxoglutarate + H(+) = 5-enolpyruvoyl-6-hydroxy-2-succinyl-cyclohex-3-ene-1-carboxylate + CO2. It participates in quinol/quinone metabolism; 1,4-dihydroxy-2-naphthoate biosynthesis; 1,4-dihydroxy-2-naphthoate from chorismate: step 2/7. The protein operates within quinol/quinone metabolism; menaquinone biosynthesis. Functionally, catalyzes the thiamine diphosphate-dependent decarboxylation of 2-oxoglutarate and the subsequent addition of the resulting succinic semialdehyde-thiamine pyrophosphate anion to isochorismate to yield 2-succinyl-5-enolpyruvyl-6-hydroxy-3-cyclohexene-1-carboxylate (SEPHCHC). The polypeptide is 2-succinyl-5-enolpyruvyl-6-hydroxy-3-cyclohexene-1-carboxylate synthase (Christiangramia forsetii (strain DSM 17595 / CGMCC 1.15422 / KT0803) (Gramella forsetii)).